We begin with the raw amino-acid sequence, 108 residues long: MMSEPGAGLDRQCDGLTWRFRVRVTPKAKKASVGGLHDGALKVSVHTVPEDGKANKAVIASLAKWLRVSKGRVAIVAGETSRLKTIVVEFKSQDEMNTADAKLKKELS.

This sequence belongs to the UPF0235 family.

The polypeptide is UPF0235 protein RB8260 (Rhodopirellula baltica (strain DSM 10527 / NCIMB 13988 / SH1)).